Here is a 230-residue protein sequence, read N- to C-terminus: Protein CbbY (230 aa).

The active-site Nucleophile is D8. D8 and D10 together coordinate Mg(2+). D8 contacts substrate. D10 (proton donor) is an active-site residue. Substrate contacts are provided by residues E17, 50–54 (GGKER), 75–78 (HRAK), and 115–121 (TTTSLPN). D176 serves as a coordination point for Mg(2+).

This sequence belongs to the HAD-like hydrolase superfamily. CbbY/CbbZ/Gph/YieH family. Mg(2+) is required as a cofactor.

The enzyme catalyses D-xylulose 1,5-bisphosphate + H2O = D-xylulose 5-phosphate + phosphate. Functionally, highly selective xylulose-1,5-bisphosphate (XuBP) phosphatase. Also shows activity towards ribulose-1,5-bisphosphate (RuBP) and fructose-1,6-bisphosphate (FBP), but not towards fructose-6-phosphate (F6P) or ribulose-5-phosphate (Ru5P). Degrades xylulose-1,5-bisphosphate, a potent inhibitor of rubisco produced by the rubisco itself. The polypeptide is Protein CbbY (Cereibacter sphaeroides (Rhodobacter sphaeroides)).